The sequence spans 362 residues: MSKNIVVLPGDHAGQEIAQEAIKVLEAISEVSPEAKFNFQHHLIGGAAIDATGSPLPDDALAAAKKADAVLLGAVGGPKWGTGSVRPEQGLLKIRKELQLYANLRPCNFASESLLDLSPLKPQHAKGTDFVVVRELVGGIYFGERKEDEGDGVAWDSEKYTKPEVQRLTRMAAFLALQHNPPLPIWSLDKANVLASSRLWRKTVEETIKNEFPQLKLNHQLIDSAAMILVKSPTQLNGIVLTSNLFGDIISDEASVIPGSLGLLPSASLASLPDTNEAFGLYEPCHGSAPDLPKGKVNPIAMILSAAMMLKLSLNLSKEGEAVEKAVKQVLDSGVRTGDLGGSNSTSEVGDAIAKAVKEILA.

77–88 lines the NAD(+) pocket; it reads GPKWGTGSVRPE. Substrate is bound by residues arginine 95, arginine 105, arginine 134, and aspartate 223. Mg(2+) is bound by residues aspartate 223, aspartate 248, and aspartate 252. 287–298 provides a ligand contact to NAD(+); the sequence is GSAPDLPKGKVN.

Belongs to the isocitrate and isopropylmalate dehydrogenases family. Homodimer. The cofactor is Mg(2+). Requires Mn(2+) as cofactor.

Its subcellular location is the cytoplasm. The catalysed reaction is (2R,3S)-3-isopropylmalate + NAD(+) = 4-methyl-2-oxopentanoate + CO2 + NADH. Its pathway is amino-acid biosynthesis; L-leucine biosynthesis; L-leucine from 3-methyl-2-oxobutanoate: step 3/4. Catalyzes the oxidation of 3-carboxy-2-hydroxy-4-methylpentanoate (3-isopropylmalate) to 3-carboxy-4-methyl-2-oxopentanoate. The product decarboxylates to 4-methyl-2 oxopentanoate. The polypeptide is 3-isopropylmalate dehydrogenase (LEU2) (Zygosaccharomyces rouxii (strain ATCC 2623 / CBS 732 / NBRC 1130 / NCYC 568 / NRRL Y-229)).